Reading from the N-terminus, the 932-residue chain is RNA-binding protein 12 (932 aa).

The interval 96-116 (DIPPANASRSGPPPSSGMSSR) is disordered. Over residues 98 to 116 (PPANASRSGPPPSSGMSSR) the composition is skewed to low complexity. The RRM 1 domain maps to 304–379 (LYVSVHGMPF…RYVEVSPATE (76 aa)). Ser352 and Ser375 each carry phosphoserine. Composition is skewed to polar residues over residues 392 to 401 (KQNMGPSGQT) and 408 to 417 (LPRSKSPSGQ). The disordered stretch occupies residues 392–424 (KQNMGPSGQTHPPPQTLPRSKSPSGQKRSRSRS). Ser420, Ser422, and Ser424 each carry phosphoserine. Positions 430 to 507 (FCVYLKGLPF…RFIQVHPITK (78 aa)) constitute an RRM 2 domain. Ser525 is subject to Phosphoserine. Residues 717-734 (NGPPFNFPGNFGGSNAFG) are compositionally biased toward low complexity. The segment at 717 to 853 (NGPPFNFPGN…PGFASSSGKP (137 aa)) is disordered. Over residues 783–811 (SGFGGGPQNFGNGPGSLGGPPGFGSGPPG) the composition is skewed to gly residues. Residues 824–836 (AFGPGPGPGPGPG) show a composition bias toward pro residues. Positions 856–932 (TVIKVQNMPF…GSRKVKLVLG (77 aa)) constitute an RRM 3 domain.

It is found in the nucleus. The sequence is that of RNA-binding protein 12 (RBM12) from Homo sapiens (Human).